The primary structure comprises 137 residues: MVHLTTLLCKAYRGGHLTIRLALGGCTNRPFYRIVAAHNKCPRDGRFVEQLGSYDPLPNSHGEKLVALNLDRIRHWIGCGAHLSKPMEKLLGLAGFFPLHPMMITNAERLRRKRAREVLLASQKTDAEATDTEATET.

Residues 1-34 (MVHLTTLLCKAYRGGHLTIRLALGGCTNRPFYRI) constitute a mitochondrion transit peptide. Thr130 carries the post-translational modification Phosphothreonine.

This sequence belongs to the bacterial ribosomal protein bS16 family. Component of the mitochondrial small ribosomal subunit (mt-SSU). Mature mammalian 55S mitochondrial ribosomes consist of a small (28S) and a large (39S) subunit. The 28S small subunit contains a 12S ribosomal RNA (12S mt-rRNA) and 30 different proteins. The 39S large subunit contains a 16S rRNA (16S mt-rRNA), a copy of mitochondrial valine transfer RNA (mt-tRNA(Val)), which plays an integral structural role, and 52 different proteins. bS16m has a zinc binding site.

Its subcellular location is the mitochondrion. This is Small ribosomal subunit protein bS16m (MRPS16) from Homo sapiens (Human).